A 76-amino-acid polypeptide reads, in one-letter code: Cytochrome c oxidase subunit 6C-1 (76 aa).

The Mitochondrial matrix portion of the chain corresponds to serine 2 to glycine 10. Residues leucine 11 to lysine 51 traverse the membrane as a helical segment. Over glutamine 52–glutamate 76 the chain is Mitochondrial intermembrane.

It belongs to the cytochrome c oxidase subunit 6c family. Component of the cytochrome c oxidase (complex IV, CIV), a multisubunit enzyme composed of 14 subunits. The complex is composed of a catalytic core of 3 subunits MT-CO1, MT-CO2 and MT-CO3, encoded in the mitochondrial DNA, and 11 supernumerary subunits COX4I, COX5A, COX5B, COX6A, COX6B, COX6C, COX7A, COX7B, COX7C, COX8 and NDUFA4, which are encoded in the nuclear genome. The complex exists as a monomer or a dimer and forms supercomplexes (SCs) in the inner mitochondrial membrane with NADH-ubiquinone oxidoreductase (complex I, CI) and ubiquinol-cytochrome c oxidoreductase (cytochrome b-c1 complex, complex III, CIII), resulting in different assemblies (supercomplex SCI(1)III(2)IV(1) and megacomplex MCI(2)III(2)IV(2)).

Its subcellular location is the mitochondrion inner membrane. It participates in energy metabolism; oxidative phosphorylation. Functionally, component of the cytochrome c oxidase, the last enzyme in the mitochondrial electron transport chain which drives oxidative phosphorylation. The respiratory chain contains 3 multisubunit complexes succinate dehydrogenase (complex II, CII), ubiquinol-cytochrome c oxidoreductase (cytochrome b-c1 complex, complex III, CIII) and cytochrome c oxidase (complex IV, CIV), that cooperate to transfer electrons derived from NADH and succinate to molecular oxygen, creating an electrochemical gradient over the inner membrane that drives transmembrane transport and the ATP synthase. Cytochrome c oxidase is the component of the respiratory chain that catalyzes the reduction of oxygen to water. Electrons originating from reduced cytochrome c in the intermembrane space (IMS) are transferred via the dinuclear copper A center (CU(A)) of subunit 2 and heme A of subunit 1 to the active site in subunit 1, a binuclear center (BNC) formed by heme A3 and copper B (CU(B)). The BNC reduces molecular oxygen to 2 water molecules using 4 electrons from cytochrome c in the IMS and 4 protons from the mitochondrial matrix. In Thunnus obesus (Bigeye tuna), this protein is Cytochrome c oxidase subunit 6C-1.